The following is a 270-amino-acid chain: Elongation factor Ts (270 aa).

The tract at residues 76–79 (TDFV) is involved in Mg(2+) ion dislocation from EF-Tu.

It belongs to the EF-Ts family.

Its subcellular location is the cytoplasm. In terms of biological role, associates with the EF-Tu.GDP complex and induces the exchange of GDP to GTP. It remains bound to the aminoacyl-tRNA.EF-Tu.GTP complex up to the GTP hydrolysis stage on the ribosome. The protein is Elongation factor Ts of Corynebacterium aurimucosum (strain ATCC 700975 / DSM 44827 / CIP 107346 / CN-1) (Corynebacterium nigricans).